The sequence spans 35 residues: Dolichyl-diphosphooligosaccharide--protein glycosyltransferase subunit 4B (35 aa).

Residues 1-8 (MFDDQDLG) are Lumenal-facing. The helical transmembrane segment at 9 to 29 (FFANFLGIFIFIMVIAYHFVV) threads the bilayer. Residues 30–35 (AEPKFE) are Cytoplasmic-facing.

This sequence belongs to the OST4 family. In terms of assembly, component of the oligosaccharyltransferase (OST) complex.

Its subcellular location is the endoplasmic reticulum membrane. Its function is as follows. Subunit of the oligosaccharyl transferase (OST) complex that catalyzes the initial transfer of a defined glycan (Glc(3)Man(9)GlcNAc(2) in eukaryotes) from the lipid carrier dolichol-pyrophosphate to an asparagine residue within an Asn-X-Ser/Thr consensus motif in nascent polypeptide chains, the first step in protein N-glycosylation. N-glycosylation occurs cotranslationally and the complex associates with the Sec61 complex at the channel-forming translocon complex that mediates protein translocation across the endoplasmic reticulum (ER). All subunits are required for a maximal enzyme activity. This is Dolichyl-diphosphooligosaccharide--protein glycosyltransferase subunit 4B (OST4B) from Arabidopsis thaliana (Mouse-ear cress).